Here is a 540-residue protein sequence, read N- to C-terminus: H(+)/hexose cotransporter 2 (540 aa).

Residues 1 to 29 lie on the Cytoplasmic side of the membrane; sequence MAGGGPVASTTTNRASQYGYARGGLNWYI. Residues 30–50 form a helical membrane-spanning segment; that stretch reads FIVALTAGSGGLLFGYDIGVT. Over 51–90 the chain is Extracellular; sequence GGVTSMPEFLQKFFPSIYDRTQQPSDSKDPYCTYDDQKLQ. The chain crosses the membrane as a helical span at residues 91–111; that stretch reads LFTSSFFLAGMFVSFFAGSVV. Over 112–124 the chain is Cytoplasmic; the sequence is RRWGRKPTMLIAS. A helical transmembrane segment spans residues 125-135; that stretch reads VLFLAGAGLNA. Topologically, residues 136-147 are extracellular; it reads GAQDLAMLVIGR. A helical membrane pass occupies residues 148-168; it reads VLLGFGVGGGNNAVPLYLSEC. Over 169–176 the chain is Cytoplasmic; sequence APPKYRGG. A helical membrane pass occupies residues 177-197; the sequence is LNMMFQLAVTIGIIVAQLVNY. Topologically, residues 198–207 are extracellular; the sequence is GTQTMNNGWR. The chain crosses the membrane as a helical span at residues 208-228; it reads LSLGLAGVPAIILLIGSLLLP. Residues 229-296 lie on the Cytoplasmic side of the membrane; the sequence is ETPNSLIERG…YSPMLIVTSL (68 aa). The chain crosses the membrane as a helical span at residues 297 to 317; it reads IAMLQQLTGINAIMFYVPVLF. Topologically, residues 318-326 are extracellular; it reads SSFGTARHA. A helical transmembrane segment spans residues 327 to 337; sequence ALLNTVIIGAV. Residues 338–355 are Cytoplasmic-facing; that stretch reads NVAATFVSIFSVDKFGRR. Residues 356–376 form a helical membrane-spanning segment; that stretch reads GLFLEGGIQMFIGQVVTAAVL. Topologically, residues 377 to 396 are extracellular; it reads GVELNKYGTNLPSSTAAGVL. A helical membrane pass occupies residues 397–417; sequence VVICVYVAAFAWSWGPLGWLV. The Cytoplasmic portion of the chain corresponds to 418–435; it reads PSEIQTLETRGAGMSMAV. A helical transmembrane segment spans residues 436-456; sequence IVNFLFSFVIGQAFLSMMCAM. At 457 to 458 the chain is on the extracellular side; sequence RW. The chain crosses the membrane as a helical span at residues 459–479; that stretch reads GVFLFFAGWVVIMTFFVYFCL. The Cytoplasmic segment spans residues 480–540; that stretch reads PETKGVPVET…SEDGKPASDQ (61 aa).

This sequence belongs to the major facilitator superfamily. Sugar transporter (TC 2.A.1.1) family.

The protein resides in the membrane. In terms of biological role, active uptake of galactose. This chain is H(+)/hexose cotransporter 2 (HUP2), found in Parachlorella kessleri (Green alga).